We begin with the raw amino-acid sequence, 98 residues long: Integration host factor subunit alpha (98 aa).

Residues 49–71 (FGNFDLRDKNQRPGRNPKTGEDI) are disordered.

Belongs to the bacterial histone-like protein family. Heterodimer of an alpha and a beta chain.

Its function is as follows. This protein is one of the two subunits of integration host factor, a specific DNA-binding protein that functions in genetic recombination as well as in transcriptional and translational control. This is Integration host factor subunit alpha from Edwardsiella ictaluri (strain 93-146).